The primary structure comprises 827 residues: MELNRRDFMKANAAMAAAAAAGMTIPVKNVYAADDGIRWDKAPCRFCGTGCSVLVGTKDGRVVATQGDPDAEVNRGLNCIKGYFLSKIMYGADRVQTPLLRMKDGKFHKEGDFTPVSWDQAFTIMAEKVKDILKKKEPNSVGMFSSGQTTIFEGYAKVKLWKGGLRSNTIDPNARHCMASAAVAFMRTFGMDEPMGCYNDIEKTDAFVLWGSNMAEMHPILWSRISDRRLSDDKVKVVVMSTFEHRSFELADTPIIFKPHSDLAILNYIANYIIQNDKVNWDFVNKHTKFKRGETDIGYGLRPDHPRQKAAKNAKTAGKMYDSDFEEFKKIVEPYTLEKAHEISGVPKDQLETLAKMYADPKQTLVSFWTMGFNQHVRGVWVNHMVYNVHLLTGKISTPGCGPFSLTGQPSACGTAREVGTFVHRLPADMVVTNPKHVEIVEKAWKLPKGTIPTVPGYPAVMQSRMLKDGKLNFLWQLCTNNMQGGPNINEEIFPGWRNPENFIVVSDPYPSVSAVAADLILPTCMWVEKEGAYGNAERRTQFWRQQVKGPGESKSDLWQIVEFSKYFKTDEVWDEALLAQMPEYRGKTLYEVLYKNGQVDKFDTPTNIPGYINDEAEHFGYYLQKGLFEEYAAFGRGHGHDLADFDTYHQVRGLRWPVVDGKETLWRYREGFDPYVKAGEGVSFYGYPDKKAIILGVPYEEPAESPDEEYDLWLCTGRVLEHWHTGTMTRRVPELHRSFPNNLCWMHPDDAKARGLRHGDKVKLITRRGEIITHLDTRGRNKCPKGLIYTTFFDAGQLANKLTLDATDPISGETDYKKCAVKVVKA.

Positions 1-32 (MELNRRDFMKANAAMAAAAAAGMTIPVKNVYA) form a signal peptide, tat-type signal. A 4Fe-4S Mo/W bis-MGD-type domain is found at 37-93 (IRWDKAPCRFCGTGCSVLVGTKDGRVVATQGDPDAEVNRGLNCIKGYFLSKIMYGAD). Residues Cys-44, Cys-47, Cys-51, and Cys-79 each contribute to the [4Fe-4S] cluster site. Mo-bis(molybdopterin guanine dinucleotide)-binding positions include Lys-81, Gln-148, Asn-173, Cys-177, 210-217 (WGSNMAEM), 241-245 (STFEH), Met-371, Gln-375, Asn-481, 507-508 (SD), Lys-530, Asp-557, and 717-726 (TGRVLEHWHT). Phe-793 contacts substrate. Mo-bis(molybdopterin guanine dinucleotide) is bound by residues Asn-801 and Lys-818.

It belongs to the prokaryotic molybdopterin-containing oxidoreductase family. NasA/NapA/NarB subfamily. In terms of assembly, component of the periplasmic nitrate reductase NapAB complex composed of NapA and NapB. The cofactor is [4Fe-4S] cluster. Mo-bis(molybdopterin guanine dinucleotide) serves as cofactor. Post-translationally, predicted to be exported by the Tat system. The position of the signal peptide cleavage has not been experimentally proven.

It is found in the periplasm. It carries out the reaction 2 Fe(II)-[cytochrome] + nitrate + 2 H(+) = 2 Fe(III)-[cytochrome] + nitrite + H2O. In terms of biological role, catalytic subunit of the periplasmic nitrate reductase complex NapAB. Receives electrons from NapB and catalyzes the reduction of nitrate to nitrite. The polypeptide is Periplasmic nitrate reductase (Actinobacillus pleuropneumoniae serotype 7 (strain AP76)).